We begin with the raw amino-acid sequence, 929 residues long: MAMATRVLAQSTPPSLACYQRNVPSRGSGRSRRSVKMMCSQLQVSGLRMQGFMGLRGNNALDTLGKSRQDFHSKVRQAMNVPKGKASRFTVKAMFERFTEKAIKVIMLAQEEARRLGHNFVGTEQILLGLIGEGTGIAAKVLKSMGINLKDARVEVEKIIGRGSGFVAVEIPFTPRAKRVLELSLEEARQLGHNYIGSEHLLLGLLREGEGVAARVLENLGADPSNIRTQVIRMVGENNEVTANVGGGSSSNKMPTLEEYGTNLTKLAEEGKLDPVVGRQPQIERVVQILGRRTKNNPCLIGEPGVGKTAIAEGLAQRIASGDVPETIEGKKVITLDMGLLVAGTKYRGEFEERLKKLMEEIRQSDEIILFIDEVHTLIGAGAAEGAIDAANILKPALARGELQCIGATTLDEYRKHIEKDPALERRFQPVKVPEPTVDETIQILKGLRERYEIHHKLRYTDESLVAAAQLSYQYISDRFLPDKAIDLIDEAGSRVRLRHAQVPEEARELEKELRQITKEKNEAVRGQDFEKAGTLRDREIELRAEVSAIQAKGKEMSKAESETGEEGPMVTESDIQHIVSSWTGIPVEKVSTDESDRLLKMEETLHKRIIGQDEAVKAISRAIRRARVGLKNPNRPIASFIFSGPTGVGKSELAKALAAYYFGSEEAMIRLDMSEFMERHTVSKLIGSPPGYVGYTEGGQLTEAVRRRPYTVVLFDEIEKAHPDVFNMMLQILEDGRLTDSKGRTVDFKNTLLIMTSNVGSSVIEKGGRRIGFDLDYDEKDSSYNRIKSLVTEELKQYFRPEFLNRLDEMIVFRQLTKLEVKEIADILLKEVFERLKKKEIELQVTERFKERVVDEGYNPSYGARPLRRAIMRLLEDSMAEKMLAREIKEGDSVIVDVDAEGNVTVLNGGSGTPTTSLEEQEDSLPVA.

A chloroplast-targeting transit peptide spans 1–38 (MAMATRVLAQSTPPSLACYQRNVPSRGSGRSRRSVKMM). In terms of domain architecture, Clp R spans 95–237 (FERFTEKAIK…RTQVIRMVGE (143 aa)). Repeat stretches follow at residues 98-163 (FTEK…IGRG) and 173-237 (FTPR…MVGE). The tract at residues 257 to 504 (LEEYGTNLTK…RVRLRHAQVP (248 aa)) is i. 302 to 309 (GEPGVGKT) contacts ATP. Residues 511-546 (EKELRQITKEKNEAVRGQDFEKAGTLRDREIELRAE) enclose the UVR domain. The segment at 552 to 571 (AKGKEMSKAESETGEEGPMV) is disordered. The segment covering 553 to 562 (KGKEMSKAES) has biased composition (basic and acidic residues). The interval 571 to 762 (VTESDIQHIV…LLIMTSNVGS (192 aa)) is II. 645–652 (GPTGVGKS) serves as a coordination point for ATP. Residues 908–919 (LNGGSGTPTTSL) show a composition bias toward polar residues. A disordered region spans residues 908–929 (LNGGSGTPTTSLEEQEDSLPVA). The span at 920–929 (EEQEDSLPVA) shows a compositional bias: acidic residues.

The protein belongs to the ClpA/ClpB family. ClpC subfamily. Homodimer. May form hexamer and interact with Clp core. Interacts (via N-terminus) with CLPS1. Interacts with CLPF. As to expression, highly expressed in rosette leaves. Expressed in roots, stems and inflorescences. Expressed in photosynthetic green tissues with high levels in young, developing leaf tissues.

The protein resides in the plastid. It is found in the chloroplast stroma. It localises to the chloroplast membrane. Its function is as follows. Molecular chaperone that hydrolyzes ATP and is associated with the chloroplast protein import apparatus. May function as the motor for chloroplast protein translocation, as translocation requires ATP hydrolysis in the stroma. May interact with a ClpP-like protease involved in degradation of denatured proteins in the chloroplast. Involved in the regulation of chlorophyll b biosynthesis through the destabilization of chlorophyllide a oxygenase (CAO) protein in response to the accumulation of chlorophyll b. Involved in leaf iron homeostasis. This is Chaperone protein ClpC1, chloroplastic from Arabidopsis thaliana (Mouse-ear cress).